A 95-amino-acid polypeptide reads, in one-letter code: Integration host factor subunit beta (95 aa).

Positions 56–95 are disordered; it reads RAPRTGRNPKTGETVELDGKHVPHFKPGKELRDRVNESIA. Residues 72–95 are compositionally biased toward basic and acidic residues; that stretch reads LDGKHVPHFKPGKELRDRVNESIA.

This sequence belongs to the bacterial histone-like protein family. Heterodimer of an alpha and a beta chain.

Functionally, this protein is one of the two subunits of integration host factor, a specific DNA-binding protein that functions in genetic recombination as well as in transcriptional and translational control. This is Integration host factor subunit beta from Pseudoalteromonas translucida (strain TAC 125).